Consider the following 463-residue polypeptide: ATP-dependent protease ATPase subunit HslU (463 aa).

ATP is bound by residues I19 and 61-66 (GVGKTE). Residues 154-175 (FGGNQNSNQTSDAQEDDEIEKK) are disordered. Residues 156-165 (GNQNSNQTSD) are compositionally biased toward polar residues. Residues D277, E341, and R413 each contribute to the ATP site.

Belongs to the ClpX chaperone family. HslU subfamily. As to quaternary structure, a double ring-shaped homohexamer of HslV is capped on each side by a ring-shaped HslU homohexamer. The assembly of the HslU/HslV complex is dependent on binding of ATP.

Its subcellular location is the cytoplasm. In terms of biological role, ATPase subunit of a proteasome-like degradation complex; this subunit has chaperone activity. The binding of ATP and its subsequent hydrolysis by HslU are essential for unfolding of protein substrates subsequently hydrolyzed by HslV. HslU recognizes the N-terminal part of its protein substrates and unfolds these before they are guided to HslV for hydrolysis. The polypeptide is ATP-dependent protease ATPase subunit HslU (Bacillus mycoides (strain KBAB4) (Bacillus weihenstephanensis)).